Consider the following 383-residue polypeptide: Chorismate synthase (383 aa).

Residue R48 participates in NADP(+) binding. FMN-binding positions include R125 to S127, G286, H301 to S305, and R328. The interval P361 to N383 is disordered.

This sequence belongs to the chorismate synthase family. FMNH2 serves as cofactor.

The catalysed reaction is 5-O-(1-carboxyvinyl)-3-phosphoshikimate = chorismate + phosphate. It functions in the pathway metabolic intermediate biosynthesis; chorismate biosynthesis; chorismate from D-erythrose 4-phosphate and phosphoenolpyruvate: step 7/7. Functionally, catalyzes the anti-1,4-elimination of the C-3 phosphate and the C-6 proR hydrogen from 5-enolpyruvylshikimate-3-phosphate (EPSP) to yield chorismate, which is the branch point compound that serves as the starting substrate for the three terminal pathways of aromatic amino acid biosynthesis. This reaction introduces a second double bond into the aromatic ring system. The polypeptide is Chorismate synthase (Haloquadratum walsbyi (strain DSM 16790 / HBSQ001)).